Reading from the N-terminus, the 307-residue chain is Ribonuclease Z (307 aa).

Positions 61, 63, 65, 66, 138, 208, and 264 each coordinate Zn(2+). The active-site Proton acceptor is D65.

This sequence belongs to the RNase Z family. In terms of assembly, homodimer. Requires Zn(2+) as cofactor.

The catalysed reaction is Endonucleolytic cleavage of RNA, removing extra 3' nucleotides from tRNA precursor, generating 3' termini of tRNAs. A 3'-hydroxy group is left at the tRNA terminus and a 5'-phosphoryl group is left at the trailer molecule.. Its function is as follows. Zinc phosphodiesterase, which displays some tRNA 3'-processing endonuclease activity. Probably involved in tRNA maturation, by removing a 3'-trailer from precursor tRNA. Also shows activity toward a broad range of substrates, such as intron containing pre-tRNAs, 5' extended precursors and non-RNA substrates. The polypeptide is Ribonuclease Z (Pyrococcus furiosus (strain ATCC 43587 / DSM 3638 / JCM 8422 / Vc1)).